The primary structure comprises 638 residues: Signal recognition particle receptor subunit alpha (638 aa).

Disordered regions lie at residues 132–244 and 283–316; these read APTT…GKKA and GTGSGGQLQDLDCSSSDDEGAAQNSTKPSATKGT. Composition is skewed to basic and acidic residues over residues 137–146 and 153–165; these read KKFEDSEKAK and IETRGEKPKEKAK. Ser-177 is modified (phosphoserine). The segment covering 204–239 has biased composition (basic and acidic residues); it reads LSKEELIRRKREEFIQKHGRGMEKSNKSTKSDAPKE. Thr-284 is subject to Phosphothreonine. Phosphoserine is present on residues Ser-296, Ser-297, and Ser-298. A compositionally biased stretch (polar residues) spans 304-314; the sequence is AQNSTKPSATK. The interval 419–636 is NG domain; it reads YVVTFCGVNG…NAKAVVAALM (218 aa). Position 425–432 (425–432) interacts with GTP; that stretch reads GVNGVGKS. A Phosphoserine modification is found at Ser-473. A GTP-binding site is contributed by 520-524; the sequence is DTAGR. Thr-578 carries the phosphothreonine modification. GTP is bound at residue 588–591; sequence TKFD.

It belongs to the GTP-binding SRP family. In terms of assembly, heterodimer with SRPRB. Interacts with the signal recognition particle (SRP) complex subunit SRP54. As to quaternary structure, (Microbial infection) May interact with Zika virus strain Mr-766 non-structural protein 4A/NS4A. May interact with Zika virus French Polynesia 10087PF/2013 non-structural protein 4A/NS4A. (Microbial infection) May interact with Dengue virus DENV2 16681 non-structural protein 4A/NS4A.

The protein resides in the endoplasmic reticulum membrane. Component of the signal recognition particle (SRP) complex receptor (SR). Ensures, in conjunction with the SRP complex, the correct targeting of the nascent secretory proteins to the endoplasmic reticulum membrane system. Forms a guanosine 5'-triphosphate (GTP)-dependent complex with the SRP subunit SRP54. SRP receptor compaction and GTPase rearrangement drive SRP-mediated cotranslational protein translocation into the ER. This Homo sapiens (Human) protein is Signal recognition particle receptor subunit alpha.